A 143-amino-acid polypeptide reads, in one-letter code: Endoribonuclease YbeY (143 aa).

Zn(2+) contacts are provided by H109, H113, and H119.

It belongs to the endoribonuclease YbeY family. Zn(2+) is required as a cofactor.

The protein localises to the cytoplasm. In terms of biological role, single strand-specific metallo-endoribonuclease involved in late-stage 70S ribosome quality control and in maturation of the 3' terminus of the 16S rRNA. The polypeptide is Endoribonuclease YbeY (Neorickettsia sennetsu (strain ATCC VR-367 / Miyayama) (Ehrlichia sennetsu)).